The chain runs to 173 residues: tRNA-specific adenosine deaminase (173 aa).

One can recognise a CMP/dCMP-type deaminase domain in the interval 9 to 121 (EFDEKMMRYA…DYKTGAIGSR (113 aa)). His61 is a binding site for Zn(2+). Residue Glu63 is the Proton donor of the active site. Positions 91 and 94 each coordinate Zn(2+).

This sequence belongs to the cytidine and deoxycytidylate deaminase family. In terms of assembly, homodimer. Zn(2+) is required as a cofactor.

It carries out the reaction adenosine(34) in tRNA + H2O + H(+) = inosine(34) in tRNA + NH4(+). Catalyzes the deamination of adenosine to inosine at the wobble position 34 of tRNA(Arg2). The protein is tRNA-specific adenosine deaminase of Haemophilus influenzae (strain ATCC 51907 / DSM 11121 / KW20 / Rd).